Here is a 288-residue protein sequence, read N- to C-terminus: Elongation factor Ts (288 aa).

The tract at residues 82–85 (TDFV) is involved in Mg(2+) ion dislocation from EF-Tu.

Belongs to the EF-Ts family.

The protein resides in the cytoplasm. Functionally, associates with the EF-Tu.GDP complex and induces the exchange of GDP to GTP. It remains bound to the aminoacyl-tRNA.EF-Tu.GTP complex up to the GTP hydrolysis stage on the ribosome. This Prosthecochloris aestuarii (strain DSM 271 / SK 413) protein is Elongation factor Ts.